Here is a 591-residue protein sequence, read N- to C-terminus: V-type ATP synthase alpha chain (591 aa).

242 to 249 (GPFGAGKT) contacts ATP.

Belongs to the ATPase alpha/beta chains family.

The catalysed reaction is ATP + H2O + 4 H(+)(in) = ADP + phosphate + 5 H(+)(out). Produces ATP from ADP in the presence of a proton gradient across the membrane. The V-type alpha chain is a catalytic subunit. The chain is V-type ATP synthase alpha chain (atpA) from Chlamydia pneumoniae (Chlamydophila pneumoniae).